The chain runs to 135 residues: Aspartate 1-decarboxylase (135 aa).

Ser-25 functions as the Schiff-base intermediate with substrate; via pyruvic acid in the catalytic mechanism. Ser-25 carries the pyruvic acid (Ser) modification. Thr-57 serves as a coordination point for substrate. Tyr-58 functions as the Proton donor in the catalytic mechanism. 73–75 is a binding site for substrate; the sequence is GSA.

The protein belongs to the PanD family. In terms of assembly, heterooctamer of four alpha and four beta subunits. It depends on pyruvate as a cofactor. In terms of processing, is synthesized initially as an inactive proenzyme, which is activated by self-cleavage at a specific serine bond to produce a beta-subunit with a hydroxyl group at its C-terminus and an alpha-subunit with a pyruvoyl group at its N-terminus.

The protein resides in the cytoplasm. It carries out the reaction L-aspartate + H(+) = beta-alanine + CO2. The protein operates within cofactor biosynthesis; (R)-pantothenate biosynthesis; beta-alanine from L-aspartate: step 1/1. Its function is as follows. Catalyzes the pyruvoyl-dependent decarboxylation of aspartate to produce beta-alanine. The protein is Aspartate 1-decarboxylase of Albidiferax ferrireducens (strain ATCC BAA-621 / DSM 15236 / T118) (Rhodoferax ferrireducens).